The sequence spans 320 residues: tRNA pseudouridine synthase B (320 aa).

Catalysis depends on aspartate 49, which acts as the Nucleophile.

This sequence belongs to the pseudouridine synthase TruB family. Type 1 subfamily.

The enzyme catalyses uridine(55) in tRNA = pseudouridine(55) in tRNA. Functionally, responsible for synthesis of pseudouridine from uracil-55 in the psi GC loop of transfer RNAs. The sequence is that of tRNA pseudouridine synthase B from Bartonella bacilliformis (strain ATCC 35685 / KC583 / Herrer 020/F12,63).